A 147-amino-acid polypeptide reads, in one-letter code: MFNMNINSPVRFVKETNRAKSPTRQSPGAAGYDLYSAYDYTIPPGERQLIKTDISMSMPKFCYGRIAPRSGLSLKGIDIGGGVIDEDYRGNIGVILINNGKCTFNVNTGDRIAQLIYQRIYYPELEEVQSLDSTDRGAQGFGSTGLR.

Arginine 24 contributes to the Mg(2+) binding site. Residues 68–70 (PRS), 82–85 (GVID), tyrosine 88, glycine 93, isoleucine 95, and arginine 111 each bind dUTP.

Belongs to the dUTPase family. Requires Mg(2+) as cofactor.

It carries out the reaction dUTP + H2O = dUMP + diphosphate + H(+). This enzyme is involved in nucleotide metabolism: it produces dUMP, the immediate precursor of thymidine nucleotides and it decreases the intracellular concentration of dUTP so that uracil cannot be incorporated into DNA. In Bos taurus (Bovine), this protein is Deoxyuridine 5'-triphosphate nucleotidohydrolase (OPG046).